Consider the following 457-residue polypeptide: RNA-binding suppressor of PAS kinase protein 1 (457 aa).

The R3H domain maps to 26–88 (RIFIIELENS…SCVILFKGEN (63 aa)). Disordered stretches follow at residues 142–181 (IDGN…IEKE), 195–291 (LNKS…NGGY), and 406–457 (FQGK…KLNI). Over residues 145–158 (NTRTPNSNLTANSN) the composition is skewed to polar residues. Positions 159–181 (KDQKIEIDDKSSTDLEQERIEKE) are enriched in basic and acidic residues. Serine 198 is modified (phosphoserine). The segment covering 226–247 (SNTQTSNGSVSSSSPFNSSVTT) has biased composition (low complexity). Residues 248-258 (IQVNKPQQQFY) are compositionally biased toward polar residues. Over residues 418 to 435 (KRSDDSNSNKNEGIRRAS) the composition is skewed to basic and acidic residues. A phosphoserine mark is found at serine 435, serine 439, and serine 447. Over residues 443-457 (RDTDSVEMKFDKLNI) the composition is skewed to basic and acidic residues.

The protein localises to the cytoplasm. In Saccharomyces cerevisiae (strain ATCC 204508 / S288c) (Baker's yeast), this protein is RNA-binding suppressor of PAS kinase protein 1 (RBS1).